Consider the following 223-residue polypeptide: Thymine-DNA glycosylase (223 aa).

The [4Fe-4S] cluster site is built by C201, C208, C211, and C217.

The protein belongs to the Nth/MutY family. [4Fe-4S] cluster serves as cofactor.

It catalyses the reaction Hydrolyzes mismatched double-stranded DNA and polynucleotides, releasing free thymine.. With respect to regulation, thymine cleavage is completely inhibited by Ni(2+), Co(2+), Zn(2+), Cu(2+) and Mn(2+). Activity is not affected by Mg(2+) and Ca(2+). Its function is as follows. DNA glycosylase that excises thymine from T/G mismatches. Also has a weak DNA glycosylase activity on uracil paired with various bases. In Aeropyrum pernix (strain ATCC 700893 / DSM 11879 / JCM 9820 / NBRC 100138 / K1), this protein is Thymine-DNA glycosylase.